Here is a 98-residue protein sequence, read N- to C-terminus: MVLIKLNIIVAFMLALSGVLIYRSHLMSTLLCLEGMMLSLFIFMAAMITHFHMFSISMMPLILLVFSACEAGVGLALLVSISNTYGNDQVQNLNLLQC.

The next 3 membrane-spanning stretches (helical) occupy residues 1–21, 36–56, and 61–81; these read MVLI…GVLI, MMLS…MFSI, and LILL…LVSI.

It belongs to the complex I subunit 4L family.

It is found in the mitochondrion membrane. The catalysed reaction is a ubiquinone + NADH + 5 H(+)(in) = a ubiquinol + NAD(+) + 4 H(+)(out). Core subunit of the mitochondrial membrane respiratory chain NADH dehydrogenase (Complex I) which catalyzes electron transfer from NADH through the respiratory chain, using ubiquinone as an electron acceptor. Part of the enzyme membrane arm which is embedded in the lipid bilayer and involved in proton translocation. This is NADH-ubiquinone oxidoreductase chain 4L (MT-ND4L) from Didelphis virginiana (North American opossum).